Reading from the N-terminus, the 185-residue chain is Cuticle protein 18.6, isoform B (185 aa).

Repeat copies occupy residues 21-24 (AAPA), 33-36 (AAPV), 41-44 (AAPV), 133-136 (AAPV), 139-142 (AAPV), and 150-153 (AAPV). A Chitin-binding type R&amp;R domain is found at 64 to 134 (HPQYSFAYNV…KEAGAHPAAA (71 aa)).

In terms of biological role, component of the cuticle of migratory locust which contains more than 100 different structural proteins. This chain is Cuticle protein 18.6, isoform B, found in Locusta migratoria (Migratory locust).